A 272-amino-acid chain; its full sequence is Cell division protein FtsQ (272 aa).

The Cytoplasmic portion of the chain corresponds to 1 to 20; it reads MSSYAPREIPLDIRLMQGTS. A helical transmembrane segment spans residues 21 to 40; that stretch reads RALFWLVALGCLFVAGHWLM. At 41–272 the chain is on the periplasmic side; the sequence is QRNWWDIRAV…KTPQPAGRKD (232 aa). The 70-residue stretch at 45 to 114 folds into the POTRA domain; it reads WDIRAVRLQG…MQLAVTLQAQ (70 aa).

It belongs to the FtsQ/DivIB family. FtsQ subfamily. In terms of assembly, part of a complex composed of FtsB, FtsL and FtsQ.

The protein resides in the cell inner membrane. In terms of biological role, essential cell division protein. May link together the upstream cell division proteins, which are predominantly cytoplasmic, with the downstream cell division proteins, which are predominantly periplasmic. May control correct divisome assembly. This chain is Cell division protein FtsQ, found in Thiomonas arsenitoxydans (strain DSM 22701 / CIP 110005 / 3As).